A 205-amino-acid chain; its full sequence is ATP-dependent Clp protease proteolytic subunit 2 (205 aa).

Ser100 acts as the Nucleophile in catalysis. The active site involves His125.

It belongs to the peptidase S14 family. Fourteen ClpP subunits assemble into 2 heptameric rings which stack back to back to give a disk-like structure with a central cavity, resembling the structure of eukaryotic proteasomes.

It localises to the cytoplasm. The enzyme catalyses Hydrolysis of proteins to small peptides in the presence of ATP and magnesium. alpha-casein is the usual test substrate. In the absence of ATP, only oligopeptides shorter than five residues are hydrolyzed (such as succinyl-Leu-Tyr-|-NHMec, and Leu-Tyr-Leu-|-Tyr-Trp, in which cleavage of the -Tyr-|-Leu- and -Tyr-|-Trp bonds also occurs).. Its function is as follows. Cleaves peptides in various proteins in a process that requires ATP hydrolysis. Has a chymotrypsin-like activity. Plays a major role in the degradation of misfolded proteins. This Chlamydia abortus (strain DSM 27085 / S26/3) (Chlamydophila abortus) protein is ATP-dependent Clp protease proteolytic subunit 2.